Reading from the N-terminus, the 426-residue chain is Vacuole membrane protein hfl11 (426 aa).

5 helical membrane passes run S39–Y59, I73–E93, G133–V153, I172–V192, and V223–L243. At S364 the chain carries Phosphoserine. Residues L386–Y409 form an ATG8-interacting region region.

This sequence belongs to the TMEM184 family. Interacts with atg8.

The protein resides in the vacuole membrane. Functionally, vacuole membrane protein that recruits ATG8 to facilitate the degradation of vacuolar integral membrane proteins during early-stationary vacuole turnover (EVT) when cells enter stationary phase. The polypeptide is Vacuole membrane protein hfl11 (Schizosaccharomyces pombe (strain 972 / ATCC 24843) (Fission yeast)).